The following is a 306-amino-acid chain: Homoserine kinase (306 aa).

ATP is bound at residue 84 to 94 (PAGLGLGSSGA).

Belongs to the GHMP kinase family. Homoserine kinase subfamily.

The protein localises to the cytoplasm. It carries out the reaction L-homoserine + ATP = O-phospho-L-homoserine + ADP + H(+). It participates in amino-acid biosynthesis; L-threonine biosynthesis; L-threonine from L-aspartate: step 4/5. Catalyzes the ATP-dependent phosphorylation of L-homoserine to L-homoserine phosphate. The sequence is that of Homoserine kinase from Sulfurisphaera tokodaii (strain DSM 16993 / JCM 10545 / NBRC 100140 / 7) (Sulfolobus tokodaii).